Reading from the N-terminus, the 265-residue chain is MPRLCSSRSGALLLALLLQASMEVRGWCLESSQCQDLTTESNLLACIRACKPDLSAETPVFPGNGDEQPLTENPRKYVMGHFRWDRFGRRNGSSSSGVGGAAQKREEEVAVGEGPGPRGDDAETGPREDKRSYSMEHFRWGKPVGKKRRPVKVYPNGAEDESAQAFPLEFKRELTGERLEQARGPEAQAESAAARAELEYGLVAEAEAEAAEKKDSGPYKMEHFRWGSPPKDKRYGGFMTSEKSQTPLVTLFKNAIIKNAHKKGQ.

The signal sequence occupies residues 1–26; sequence MPRLCSSRSGALLLALLLQASMEVRG. Disulfide bonds link Cys-28–Cys-50 and Cys-34–Cys-46. An O-linked (GalNAc...) threonine glycan is attached at Thr-71. Phe-87 is subject to Phenylalanine amide. Positions 89 to 138 are disordered; the sequence is RRNGSSSSGVGGAAQKREEEVAVGEGPGPRGDDAETGPREDKRSYSMEHF. A glycan (N-linked (GlcNAc...) asparagine) is linked at Asn-91. A propeptide spanning residues 106-129 is cleaved from the precursor; that stretch reads EEEVAVGEGPGPRGDDAETGPRED. Residues 118-138 are compositionally biased toward basic and acidic residues; it reads RGDDAETGPREDKRSYSMEHF. An N-acetylserine; in Corticotropin modification is found at Ser-132. Val-144 is subject to Valine amide. Ser-162 carries the post-translational modification Phosphoserine. Glu-173 is modified (pyrrolidone carboxylic acid (Glu); partial). Tyr-200 is subject to Sulfotyrosine. The segment at 209-240 is disordered; sequence EAAEKKDSGPYKMEHFRWGSPPKDKRYGGFMT. Over residues 210–235 the composition is skewed to basic and acidic residues; that stretch reads AAEKKDSGPYKMEHFRWGSPPKDKRY.

This sequence belongs to the POMC family. In terms of processing, specific enzymatic cleavages at paired basic residues yield the different active peptides. As to expression, ACTH and MSH are produced by the pituitary gland.

Its subcellular location is the secreted. Stimulates the adrenal glands to release cortisol. Its function is as follows. Anorexigenic peptide. Increases the pigmentation of skin by increasing melanin production in melanocytes. In terms of biological role, endogenous orexigenic opiate. Functionally, endogenous opiate. The polypeptide is Pro-opiomelanocortin (POMC) (Bos taurus (Bovine)).